A 413-amino-acid chain; its full sequence is Multifunctional CCA protein (413 aa).

The ATP site is built by G8 and R11. Residues G8 and R11 each contribute to the CTP site. The Mg(2+) site is built by D21 and D23. Residues R91, R137, and R140 each coordinate ATP. Residues R91, R137, and R140 each contribute to the CTP site. The 102-residue stretch at 228–329 (TGLHTLMTVT…VKLFDSIDAW (102 aa)) folds into the HD domain.

This sequence belongs to the tRNA nucleotidyltransferase/poly(A) polymerase family. Bacterial CCA-adding enzyme type 1 subfamily. Monomer. Can also form homodimers and oligomers. Requires Mg(2+) as cofactor. Ni(2+) is required as a cofactor.

It carries out the reaction a tRNA precursor + 2 CTP + ATP = a tRNA with a 3' CCA end + 3 diphosphate. The catalysed reaction is a tRNA with a 3' CCA end + 2 CTP + ATP = a tRNA with a 3' CCACCA end + 3 diphosphate. Its function is as follows. Catalyzes the addition and repair of the essential 3'-terminal CCA sequence in tRNAs without using a nucleic acid template. Adds these three nucleotides in the order of C, C, and A to the tRNA nucleotide-73, using CTP and ATP as substrates and producing inorganic pyrophosphate. tRNA 3'-terminal CCA addition is required both for tRNA processing and repair. Also involved in tRNA surveillance by mediating tandem CCA addition to generate a CCACCA at the 3' terminus of unstable tRNAs. While stable tRNAs receive only 3'-terminal CCA, unstable tRNAs are marked with CCACCA and rapidly degraded. The polypeptide is Multifunctional CCA protein (Klebsiella pneumoniae subsp. pneumoniae (strain ATCC 700721 / MGH 78578)).